A 213-amino-acid polypeptide reads, in one-letter code: Orotidine 5'-phosphate decarboxylase (213 aa).

Substrate-binding positions include aspartate 6, lysine 25, 52 to 61 (DLKLADIDNT), serine 109, 158 to 168 (PGVGAQGAMIG), glycine 181, and arginine 182. Residue lysine 54 is the Proton donor of the active site.

It belongs to the OMP decarboxylase family. Type 1 subfamily. Homodimer.

The catalysed reaction is orotidine 5'-phosphate + H(+) = UMP + CO2. It functions in the pathway pyrimidine metabolism; UMP biosynthesis via de novo pathway; UMP from orotate: step 2/2. Functionally, catalyzes the decarboxylation of orotidine 5'-monophosphate (OMP) to uridine 5'-monophosphate (UMP). The polypeptide is Orotidine 5'-phosphate decarboxylase (Sulfurisphaera tokodaii (strain DSM 16993 / JCM 10545 / NBRC 100140 / 7) (Sulfolobus tokodaii)).